Reading from the N-terminus, the 803-residue chain is H(+)/Cl(-) exchange transporter 7 (803 aa).

Residues 1-46 (MANVSKKVSWSGRDRDDEEGAPLLRRTGQPDEETPLLNGAGPGARQ) form a disordered region. Residues 1 to 124 (MANVSKKVSW…TAFRTVEIKR (124 aa)) are Cytoplasmic-facing. Position 9 is a phosphoserine (serine 9). The next 2 membrane-spanning stretches (helical) occupy residues 125–157 (WVIC…YRVI) and 172–195 (FSLL…VAFI). The Selectivity filter part_1 motif lies at 201–205 (GSGIP). Serine 202 contacts chloride. The helical intramembrane region spans 204–211 (IPQIKCFL). Helical transmembrane passes span 221–239 (RLKT…VVGG) and 245–262 (EGPM…ISQG). Positions 243–247 (GKEGP) match the Selectivity filter part_2 motif. 2 intramembrane regions (helical) span residues 286 to 298 (FVSA…VSAA) and 302 to 310 (PVGGVLFSL). 5 helical membrane-spanning segments follow: residues 320–339 (FLTW…LNFV), 373–403 (IPVF…FRIR), 408–430 (PCLQ…FVLI), 485–505 (PMTL…TYGL), and 510–533 (GVFI…MSYL). Positions 510–514 (GVFIP) match the Selectivity filter part_3 motif. A chloride-binding site is contributed by phenylalanine 512. Residues 543 to 557 (GKYALMGAAAQLGGI) constitute an intramembrane region (helical). An intramembrane region (note=Loop between two helices) is located at residues 558–560 (VRM). Residues 561 to 572 (TLSLTVIMMEAT) constitute an intramembrane region (helical). Residues 573 to 576 (SNVT) constitute an intramembrane region (note=Loop between two helices). Residues 577–595 (YGFPIMLVLMTAKIVGDVF) traverse the membrane as a helical segment. Residues 596–803 (IEGLYDMHIQ…GLEELSLAQT (208 aa)) are Cytoplasmic-facing. Tyrosine 600 serves as a coordination point for chloride. CBS domains follow at residues 629–693 (MSTP…VFVE) and 739–797 (MNPS…GLEE). ATP-binding positions include 656–658 (HNG) and 781–784 (TRKD). Serine 799 is modified (phosphoserine).

The protein belongs to the chloride channel (TC 2.A.49) family. ClC-7/CLCN7 subfamily. Chloride channel 7 are heteromers of alpha (CLCN7) and beta (OSTM1) subunits. As to expression, brain, testis, muscle and kidney.

The protein resides in the lysosome membrane. It catalyses the reaction 2 chloride(in) + H(+)(out) = 2 chloride(out) + H(+)(in). Its function is as follows. Slowly voltage-gated channel mediating the exchange of chloride ions against protons. Functions as antiporter and contributes to the acidification of the lysosome lumen and may be involved in maintaining lysosomal pH. The CLC channel family contains both chloride channels and proton-coupled anion transporters that exchange chloride or another anion for protons. The presence of conserved gating glutamate residues is typical for family members that function as antiporters. The polypeptide is H(+)/Cl(-) exchange transporter 7 (Clcn7) (Rattus norvegicus (Rat)).